We begin with the raw amino-acid sequence, 552 residues long: AP-1-like transcription factor (552 aa).

Residues 1-14 (MSGQTETLSSTSNI) show a composition bias toward polar residues. The interval 1-99 (MSGQTETLSS…QRAFRKRKED (99 aa)) is disordered. Positions 36–47 (PVSDRSSRRTSS) are enriched in basic and acidic residues. Acidic residues predominate over residues 48-61 (EEVDLMPNVDDEVD). Residues 62-80 (GDVKPKKIGRKNSDQEPSS) show a composition bias toward basic and acidic residues. Positions 76–139 (QEPSSKRKAQ…RQLEEELRIL (64 aa)) constitute a bZIP domain. Residues 81–88 (KRKAQNRA) carry the Nuclear localization signal motif. The tract at residues 81–102 (KRKAQNRAAQRAFRKRKEDHLK) is basic motif. A leucine-zipper region spans residues 104-111 (LETQVVTL). Residues 213-244 (QVPPTLVDSNSAQGTLSPETPSSSDSPSNLYL) are disordered. Positions 219 to 228 (VDSNSAQGTL) are enriched in polar residues. Positions 229-240 (SPETPSSSDSPS) are enriched in low complexity. The n-CRD stretch occupies residues 259-290 (CSALSNGENGEDVADGKQFCQKLSTACGSIAC). 2 disulfides stabilise this stretch: Cys-278–Cys-501 and Cys-285–Cys-532. A disordered region spans residues 460–489 (ISNHPDEVPPDGLPQKGKHDTSSQMPSENE). The c-CRD stretch occupies residues 501 to 532 (CPKVWSKIINHPRFESFDIDDLCSKLKNKAKC). Positions 515 to 533 (ESFDIDDLCSKLKNKAKCS) match the Nuclear export signal motif.

Belongs to the bZIP family. YAP subfamily. Homodimer. The reduced form of pap1 interacts in the nucleus with the nuclear export protein crm1, and in the cytoplasm with the peroxiredoxin tpx1. Depending on the oxidative stress inducing agent, pap1 can undergo two distinct conformational changes, both masking the nuclear export signal, thus abolishing nuclear export by crm1/exportin 1. The glutathione-depleting agent diethylmaleate (DEM) leads to the non-reversible modification of at least 2 cysteine residues in the c-CRD. Peroxide stress induces the formation of a tpx1-dependent interdomain disulfide bond between Cys-278 and Cys-501.

Its subcellular location is the nucleus. It localises to the cytoplasm. Functionally, transcription activator involved in multidrug resistance, oxidative stress response, and redox homeostasis. Regulates the transcription of genes encoding antioxidant enzymes like catalase ctt1 and components of the cellular thiol-reducing pathways, including the thioredoxin system (trx2, trr1), ABC transporters involved in multidrug resistance like bfr1/hba2 and pmd1 as well as the gene obr1/apt1. Preferentially binds to promoters with the core binding site 5'-TTA[CG]TAA-3'. Activity of the transcription factor is controlled through oxidation of specific cysteine residues resulting in the alteration of its subcellular location. Oxidative stress induces nuclear accumulation and as a result pap1 transcriptional activity. Required for sty1/spc1-conferred staurosporine resistance. The chain is AP-1-like transcription factor (pap1) from Schizosaccharomyces pombe (strain 972 / ATCC 24843) (Fission yeast).